Reading from the N-terminus, the 263-residue chain is Endonuclease 8 (263 aa).

Residue proline 2 is the Schiff-base intermediate with DNA of the active site. Glutamate 3 functions as the Proton donor in the catalytic mechanism. The active-site Proton donor; for beta-elimination activity is lysine 53. 3 residues coordinate DNA: glutamine 70, arginine 125, and asparagine 169. An FPG-type zinc finger spans residues 229-263 (KVFHRDGEACERCGGIIEKTTLSSRPFYWCPHCQK). The Proton donor; for delta-elimination activity role is filled by arginine 253.

Belongs to the FPG family. Zn(2+) is required as a cofactor.

It catalyses the reaction 2'-deoxyribonucleotide-(2'-deoxyribose 5'-phosphate)-2'-deoxyribonucleotide-DNA = a 3'-end 2'-deoxyribonucleotide-(2,3-dehydro-2,3-deoxyribose 5'-phosphate)-DNA + a 5'-end 5'-phospho-2'-deoxyribonucleoside-DNA + H(+). Its function is as follows. Involved in base excision repair of DNA damaged by oxidation or by mutagenic agents. Acts as a DNA glycosylase that recognizes and removes damaged bases. Has a preference for oxidized pyrimidines, such as thymine glycol, 5,6-dihydrouracil and 5,6-dihydrothymine. Has AP (apurinic/apyrimidinic) lyase activity and introduces nicks in the DNA strand. Cleaves the DNA backbone by beta-delta elimination to generate a single-strand break at the site of the removed base with both 3'- and 5'-phosphates. The polypeptide is Endonuclease 8 (Salmonella paratyphi B (strain ATCC BAA-1250 / SPB7)).